Consider the following 391-residue polypeptide: Acridone synthase 2 (391 aa).

Cys-164 is an active-site residue.

Belongs to the thiolase-like superfamily. Chalcone/stilbene synthases family. Homodimer.

It catalyses the reaction N-methylanthraniloyl-CoA + 3 malonyl-CoA + 3 H(+) = 1,3-dihydroxy-N-methylacridone + 3 CO2 + 4 CoA + H2O. This Ruta graveolens (Common rue) protein is Acridone synthase 2 (ACS2).